We begin with the raw amino-acid sequence, 322 residues long: Interferon regulatory factor 1 (322 aa).

Residues 5–113 (RMRMRPWLEM…SAVRVYRMLP (109 aa)) constitute a DNA-binding region (IRF tryptophan pentad repeat). Position 78 is an N6-acetyllysine (lysine 78). The tract at residues 92-164 (EEVKDQSRNK…STLPDDHSSY (73 aa)) is disordered. The segment covering 141 to 157 (GESSPDTFSDGLSSSTL) has biased composition (polar residues). Residues lysine 276 and lysine 296 each participate in a glycyl lysine isopeptide (Lys-Gly) (interchain with G-Cter in SUMO) cross-link.

The protein belongs to the IRF family. Monomer. Homodimer. Interacts with EP300. Interacts with MYD88. Interacts with PIAS3. Interacts with SPOP. Phosphorylated by CK2 and this positively regulates its activity. In terms of processing, sumoylation represses the transcriptional activity and displays enhanced resistance to protein degradation. Sumoylated by UBE2I/UBC9 and SUMO1. Inactivates the tumor suppressor activity. Elevated levels in tumor cells. Major site is Lys-276. Sumoylation is enhanced by PIAS3. Desumoylated by SENP1 in tumor cells and appears to compete with ubiquitination on C-terminal sites. Post-translationally, ubiquitinated in a SPOP-depedent manner. Appears to compete with sumoylation on C-terminal sites.

It localises to the nucleus. It is found in the cytoplasm. With respect to regulation, activated by MYD88. Its function is as follows. Transcriptional regulator which displays a remarkable functional diversity in the regulation of cellular responses. Regulates transcription of IFN and IFN-inducible genes, host response to viral and bacterial infections, regulation of many genes expressed during hematopoiesis, inflammation, immune responses and cell proliferation and differentiation, regulation of the cell cycle and induction of growth arrest and programmed cell death following DNA damage. Stimulates both innate and acquired immune responses through the activation of specific target genes and can act as a transcriptional activator and repressor regulating target genes by binding to an interferon-stimulated response element (ISRE) in their promoters. Has an essentail role in IFNG-dependent immunity to mycobacteria. Binds to a consensus sequence in gene promoters. Its target genes for transcriptional activation activity include: genes involved in anti-viral response, such as IFN-alpha/beta, RIGI, TNFSF10/TRAIL, ZBP1, OAS1/2, PIAS1/GBP, EIF2AK2/PKR and RSAD2/viperin; antibacterial response, such as GBP2, GBP5 and NOS2/INOS; anti-proliferative response, such as p53/TP53, LOX and CDKN1A; apoptosis, such as BBC3/PUMA, CASP1, CASP7 and CASP8; immune response, such as IL7, IL12A/B and IL15, PTGS2/COX2 and CYBB; DNA damage responses and DNA repair, such as POLQ/POLH; MHC class I expression, such as TAP1, PSMB9/LMP2, PSME1/PA28A, PSME2/PA28B and B2M and MHC class II expression, such as CIITA; metabolic enzymes, such as ACOD1/IRG1. Represses genes involved in anti-proliferative response, such as BIRC5/survivin, CCNB1, CCNE1, CDK1, CDK2 and CDK4 and in immune response, such as FOXP3, IL4, ANXA2 and TLR4. Stimulates p53/TP53-dependent transcription through enhanced recruitment of EP300 leading to increased acetylation of p53/TP53. Plays an important role in immune response directly affecting NK maturation and activity, macrophage production of IL12, Th1 development and maturation of CD8+ T-cells. Also implicated in the differentiation and maturation of dendritic cells and in the suppression of regulatory T (Treg) cells development. Acts as a tumor suppressor and plays a role not only in antagonism of tumor cell growth but also in stimulating an immune response against tumor cells. The polypeptide is Interferon regulatory factor 1 (IRF1) (Sus scrofa (Pig)).